A 180-amino-acid chain; its full sequence is NADH-quinone oxidoreductase subunit I (180 aa).

2 4Fe-4S ferredoxin-type domains span residues 48-80 (IVLT…LQKA) and 90-119 (EFFR…LTPD). Positions 60, 63, 66, 70, 99, 102, 105, and 109 each coordinate [4Fe-4S] cluster.

It belongs to the complex I 23 kDa subunit family. In terms of assembly, NDH-1 is composed of 13 different subunits. Subunits NuoA, H, J, K, L, M, N constitute the membrane sector of the complex. [4Fe-4S] cluster serves as cofactor.

The protein resides in the cell inner membrane. It catalyses the reaction a quinone + NADH + 5 H(+)(in) = a quinol + NAD(+) + 4 H(+)(out). NDH-1 shuttles electrons from NADH, via FMN and iron-sulfur (Fe-S) centers, to quinones in the respiratory chain. The immediate electron acceptor for the enzyme in this species is believed to be ubiquinone. Couples the redox reaction to proton translocation (for every two electrons transferred, four hydrogen ions are translocated across the cytoplasmic membrane), and thus conserves the redox energy in a proton gradient. The protein is NADH-quinone oxidoreductase subunit I of Edwardsiella ictaluri (strain 93-146).